Consider the following 260-residue polypeptide: Chlorocatechol 1,2-dioxygenase (260 aa).

Positions 130, 164, 188, and 190 each coordinate Fe cation.

Belongs to the intradiol ring-cleavage dioxygenase family. Fe(3+) serves as cofactor.

The catalysed reaction is 3-chlorocatechol + O2 = (2E,4Z)-2-chloromuconate + 2 H(+). It carries out the reaction 3,5-dichlorocatechol + O2 = (2E,4E)-2,4-dichloromuconate + 2 H(+). Its pathway is aromatic compound metabolism; 3-chlorocatechol degradation. Preferentially converts 3-chlorocatechol and 3,5-dichlorocatechol as opposed to other chlorinated catechols. Retains diminished activity toward non-chlorinated substrates. The protein is Chlorocatechol 1,2-dioxygenase (clcA) of Pseudomonas putida (Arthrobacter siderocapsulatus).